A 344-amino-acid chain; its full sequence is Dihydroorotase (344 aa).

Positions 13 and 15 each coordinate Zn(2+). Substrate-binding positions include 15-17 (HLR) and asparagine 41. Residues lysine 98, histidine 135, and histidine 173 each coordinate Zn(2+). Lysine 98 carries the post-translational modification N6-carboxylysine. Histidine 135 contacts substrate. Leucine 218 contributes to the substrate binding site. Residue aspartate 247 coordinates Zn(2+). Residue aspartate 247 is part of the active site. Residues histidine 251 and alanine 263 each coordinate substrate.

It belongs to the metallo-dependent hydrolases superfamily. DHOase family. Class II DHOase subfamily. In terms of assembly, homodimer. The cofactor is Zn(2+).

The enzyme catalyses (S)-dihydroorotate + H2O = N-carbamoyl-L-aspartate + H(+). The protein operates within pyrimidine metabolism; UMP biosynthesis via de novo pathway; (S)-dihydroorotate from bicarbonate: step 3/3. Its function is as follows. Catalyzes the reversible cyclization of carbamoyl aspartate to dihydroorotate. This Neisseria meningitidis serogroup B (strain ATCC BAA-335 / MC58) protein is Dihydroorotase.